Reading from the N-terminus, the 267-residue chain is Putative metal-binding protein TM_0123 (267 aa).

The signal sequence occupies residues Met-1–Leu-15. A divalent metal cation-binding residues include His-53, His-107, and His-172.

It belongs to the bacterial solute-binding protein 9 family.

The protein resides in the periplasm. Functionally, part of an ATP-binding cassette (ABC) transport system involved in metal import. Binds a metal with high affinity and specificity and delivers it to the membrane permease for translocation into the cytoplasm. This Thermotoga maritima (strain ATCC 43589 / DSM 3109 / JCM 10099 / NBRC 100826 / MSB8) protein is Putative metal-binding protein TM_0123.